A 209-amino-acid chain; its full sequence is Glycerol-3-phosphate acyltransferase (209 aa).

Helical transmembrane passes span 4–24 (IAIGMIIFAYLCGSVSNAILI), 53–75 (LAAAGVMVFDVLKGMIPVWIGYG), 80–102 (PFWLGLVAIAACLGHIYPIFFHF), 112–132 (LGAIAPIGYDLSGLMIGTWLL), and 138–158 (GYSSLGAIVSALIAPFYVWWF).

It belongs to the PlsY family. As to quaternary structure, probably interacts with PlsX.

Its subcellular location is the cell inner membrane. It carries out the reaction an acyl phosphate + sn-glycerol 3-phosphate = a 1-acyl-sn-glycero-3-phosphate + phosphate. It functions in the pathway lipid metabolism; phospholipid metabolism. In terms of biological role, catalyzes the transfer of an acyl group from acyl-phosphate (acyl-PO(4)) to glycerol-3-phosphate (G3P) to form lysophosphatidic acid (LPA). This enzyme utilizes acyl-phosphate as fatty acyl donor, but not acyl-CoA or acyl-ACP. The chain is Glycerol-3-phosphate acyltransferase from Sodalis glossinidius (strain morsitans).